The sequence spans 171 residues: Regulator of ribonuclease activity A (171 aa).

This sequence belongs to the RraA family. As to quaternary structure, homotrimer. Binds to both RNA-binding sites in the C-terminal region of Rne and to RhlB.

The protein localises to the cytoplasm. Functionally, globally modulates RNA abundance by binding to RNase E (Rne) and regulating its endonucleolytic activity. Can modulate Rne action in a substrate-dependent manner by altering the composition of the degradosome. Modulates RNA-binding and helicase activities of the degradosome. The polypeptide is Regulator of ribonuclease activity A (Vibrio cholerae serotype O1 (strain ATCC 39315 / El Tor Inaba N16961)).